A 325-amino-acid chain; its full sequence is DNA-directed RNA polymerase subunit alpha (325 aa).

Residues 1-231 (MQNSLLKPRI…DQLNVFAALE (231 aa)) are alpha N-terminal domain (alpha-NTD). The interval 246–325 (VDPILLRPVD…ENWPPAGLEK (80 aa)) is alpha C-terminal domain (alpha-CTD).

Belongs to the RNA polymerase alpha chain family. Homodimer. The RNAP catalytic core consists of 2 alpha, 1 beta, 1 beta' and 1 omega subunit. When a sigma factor is associated with the core the holoenzyme is formed, which can initiate transcription.

The catalysed reaction is RNA(n) + a ribonucleoside 5'-triphosphate = RNA(n+1) + diphosphate. In terms of biological role, DNA-dependent RNA polymerase catalyzes the transcription of DNA into RNA using the four ribonucleoside triphosphates as substrates. The polypeptide is DNA-directed RNA polymerase subunit alpha (Herminiimonas arsenicoxydans).